We begin with the raw amino-acid sequence, 415 residues long: F-box protein ETP1 (415 aa).

Residues 1 to 46 (MTIPDLCNDLVDEILCRVPARNLKRLRSTSKRWNRLFKDDRRFARE) form the F-box domain.

In terms of assembly, interacts with EIN2 (via C-terminus).

In terms of biological role, negative regulator of EIN2 protein stability. In Arabidopsis thaliana (Mouse-ear cress), this protein is F-box protein ETP1.